Here is a 347-residue protein sequence, read N- to C-terminus: Gas vesicle ATPase GvpN (347 aa).

The disordered stretch occupies residues 1–50; it reads MTNSSRERKVRGSQIRTSRREKQDKNARNRTEKELTRLENHQTHRTKNGT. A compositionally biased stretch (basic and acidic residues) spans 18 to 42; the sequence is SRREKQDKNARNRTEKELTRLENHQ. Residue 91-98 coordinates ATP; that stretch reads GPTGCGKT.

This sequence belongs to the CbbQ/NirQ/NorQ/GpvN family. In terms of assembly, forms homodimers, a GvpN-GvpO heterodimer, interacts with GvpC and GvpL, might interact with GvpA.

It localises to the gas vesicle. The protein localises to the cytoplasm. It catalyses the reaction ATP + H2O = ADP + phosphate + H(+). Functionally, an ATPase that functions in gas vesicle formation. A minor component of the gas vesicle, also found in soluble extracts. Gas vesicles are hollow, gas filled proteinaceous nanostructures found in some microorganisms. They allow positioning of halobacteria at the optimal depth for growth in the poorly aerated, shallow brine pools of their habitat. In terms of biological role, expression of a 9.5 kb mc-vac DNA fragment containing 2 divergently transcribed regions (gvpD-gvpE-gvpF-gvpG-gvpH-gvpI-gvpJ-gvpK-gvpL-gvpM and gvpA-gvpC-gvpN-gvpO) allows H.volcanii to produce gas vesicles. The chain is Gas vesicle ATPase GvpN from Haloferax mediterranei (strain ATCC 33500 / DSM 1411 / JCM 8866 / NBRC 14739 / NCIMB 2177 / R-4) (Halobacterium mediterranei).